The primary structure comprises 117 residues: Large ribosomal subunit protein bL20 (117 aa).

The protein belongs to the bacterial ribosomal protein bL20 family.

In terms of biological role, binds directly to 23S ribosomal RNA and is necessary for the in vitro assembly process of the 50S ribosomal subunit. It is not involved in the protein synthesizing functions of that subunit. The polypeptide is Large ribosomal subunit protein bL20 (Rickettsia peacockii (strain Rustic)).